A 465-amino-acid chain; its full sequence is Hydroxyacid-oxoacid transhydrogenase, mitochondrial (465 aa).

This sequence belongs to the iron-containing alcohol dehydrogenase family. Hydroxyacid-oxoacid transhydrogenase subfamily.

The protein localises to the mitochondrion. The enzyme catalyses (S)-3-hydroxybutanoate + 2-oxoglutarate = (R)-2-hydroxyglutarate + acetoacetate. The catalysed reaction is 4-hydroxybutanoate + 2-oxoglutarate = (R)-2-hydroxyglutarate + succinate semialdehyde. In terms of biological role, catalyzes the cofactor-independent reversible oxidation of gamma-hydroxybutyrate (GHB) to succinic semialdehyde (SSA) coupled to reduction of 2-ketoglutarate (2-KG) to D-2-hydroxyglutarate (D-2-HG). L-3-hydroxybutyrate (L-3-OHB) is also a substrate for HOT when using 2-KG as hydrogen acceptor, resulting in the formation of D-2-HG. In Caenorhabditis elegans, this protein is Hydroxyacid-oxoacid transhydrogenase, mitochondrial.